Reading from the N-terminus, the 147-residue chain is Secreted hemophore CSA2 (147 aa).

An N-terminal signal peptide occupies residues Met-1–Ala-20. Residues Asn-34–Thr-145 form the CFEM domain. Intrachain disulfides connect Cys-62–Cys-102, Cys-66–Cys-97, Cys-76–Cys-83, and Cys-85–Cys-118. Asp-80 is a heme binding site.

It belongs to the RBT5 family. In terms of assembly, homodimer. The possibility of a transient honotrimer assembly of the holo protein is not ruled out.

The protein resides in the secreted. Functionally, secreted heme-binding protein involved in the utilization of iron from human hemoglobin during hyphal growth. May also play a role in non-hemoglobin iron utilization. Heme transfer occurs between PGA7, RBT5 and CSA2 supporting a model in which the 3 CFEM proteins cooperate in a heme-acquisition system and form a cross-cell wall heme-transfer cascade. The ability to acquire iron from host tissues is a major virulence factor of pathogenic microorganisms. This chain is Secreted hemophore CSA2 (CSA2), found in Candida albicans (strain SC5314 / ATCC MYA-2876) (Yeast).